The primary structure comprises 957 residues: Nitrite reductase [NAD(P)H] large subunit (957 aa).

Residue 44–79 (YDRVHLTEYFAGRSAESLSLVEGDFFTQHGIELRLS) participates in FAD binding. 193–225 (LREKISELGVGVHTSKATTEIVRNEQGLQLNFR) is an NAD(+) binding site. [2Fe-2S] cluster contacts are provided by Cys423, Cys425, Cys457, and Cys460. 4 residues coordinate [4Fe-4S] cluster: Cys639, Cys645, Cys679, and Cys683. Cys683 lines the siroheme pocket.

It belongs to the nitrite and sulfite reductase 4Fe-4S domain family. As to quaternary structure, homodimer which associates with NirD. Requires siroheme as cofactor. The cofactor is [2Fe-2S] cluster. It depends on [4Fe-4S] cluster as a cofactor. FAD is required as a cofactor.

The catalysed reaction is NH4(+) + 3 NADP(+) + 2 H2O = nitrite + 3 NADPH + 5 H(+). It catalyses the reaction NH4(+) + 3 NAD(+) + 2 H2O = nitrite + 3 NADH + 5 H(+). The protein operates within nitrogen metabolism; nitrate reduction (assimilation). This chain is Nitrite reductase [NAD(P)H] large subunit (nasB), found in Klebsiella oxytoca.